A 583-amino-acid polypeptide reads, in one-letter code: Afadin- and alpha-actinin-binding protein (583 aa).

Coiled coils occupy residues 108–220 (NNVE…LAIE), 255–333 (DYEA…QLTN), and 420–453 (EEKE…AIRL). Residues 285–328 (LSPCPPLNRGGSAEESQELGDSDREERSAETSRETLDQSCEHAR) form a disordered region. The segment covering 305-328 (DSDREERSAETSRETLDQSCEHAR) has biased composition (basic and acidic residues). The interval 480-527 (DRMRSSSSDGQSALSVKSEPEIRTSSSKAPPVKSSAYTTFSTPKSSKS) is disordered. A compositionally biased stretch (polar residues) spans 484–494 (SSSSDGQSALS). Residues 504–515 (SSSKAPPVKSSA) show a composition bias toward low complexity. Residues 516–527 (YTTFSTPKSSKS) show a composition bias toward polar residues.

This sequence belongs to the ADIP family.

It is found in the cell junction. The protein localises to the adherens junction. The protein resides in the cytoplasm. It localises to the cytoskeleton. Its subcellular location is the microtubule organizing center. It is found in the centrosome. The protein localises to the centriolar satellite. Functionally, belongs to an adhesion system, which plays a role in the organization of homotypic, interneuronal and heterotypic cell-cell adherens junctions (AJs). Involved in cell movement. Acts as a centrosome maturation factor, probably by maintaining the integrity of the pericentriolar material and proper microtubule nucleation at mitotic spindle poles. In Oryzias latipes (Japanese rice fish), this protein is Afadin- and alpha-actinin-binding protein (ssx2ip).